We begin with the raw amino-acid sequence, 234 residues long: MPLNCDTKTAGEISSSIPSGSGSHQPAAQSSGMKIAEIFTSLQGEGLTSGYPTIFIRLAGCNLSCSYCDTPASRQGGMDMNVSEVVAGALLQKPHYVCITGGEPLLQKDEVAELARQLIKAGKMVSIETNGTVPFDDLPSDISICMDVKCPSSGEFSNINLLSDLKSTDSVKFVVGTDDDLQYAEKVIMSHPTKAEIFISPIYGTDYQRIASYILSRNLPARMQLQLHKFIGLP.

The segment at 1–28 (MPLNCDTKTAGEISSSIPSGSGSHQPAA) is disordered. Positions 13–23 (ISSSIPSGSGS) are enriched in low complexity. Residues 42–44 (LQG) and Arg-57 contribute to the substrate site. Residues 48 to 234 (TSGYPTIFIR…LQLHKFIGLP (187 aa)) enclose the Radical SAM core domain. [4Fe-4S] cluster-binding residues include Cys-61, Cys-65, and Cys-68. A Mg(2+)-binding site is contributed by Thr-70. A substrate-binding site is contributed by Thr-100. Gly-102 serves as a coordination point for S-adenosyl-L-methionine. Pro-234 is a substrate binding site.

This sequence belongs to the radical SAM superfamily. 7-carboxy-7-deazaguanine synthase family. Homodimer. It depends on [4Fe-4S] cluster as a cofactor. S-adenosyl-L-methionine is required as a cofactor. The cofactor is Mg(2+).

The enzyme catalyses 6-carboxy-5,6,7,8-tetrahydropterin + H(+) = 7-carboxy-7-deazaguanine + NH4(+). It participates in purine metabolism; 7-cyano-7-deazaguanine biosynthesis. Its function is as follows. Catalyzes the complex heterocyclic radical-mediated conversion of 6-carboxy-5,6,7,8-tetrahydropterin (CPH4) to 7-carboxy-7-deazaguanine (CDG), a step common to the biosynthetic pathways of all 7-deazapurine-containing compounds. The chain is 7-carboxy-7-deazaguanine synthase from Methanospirillum hungatei JF-1 (strain ATCC 27890 / DSM 864 / NBRC 100397 / JF-1).